Here is a 168-residue protein sequence, read N- to C-terminus: Cyclic pyranopterin monophosphate synthase (168 aa).

Substrate-binding positions include 75–77 (MCH) and 115–116 (ME). D130 is a catalytic residue.

This sequence belongs to the MoaC family. Homohexamer; trimer of dimers.

It carries out the reaction (8S)-3',8-cyclo-7,8-dihydroguanosine 5'-triphosphate = cyclic pyranopterin phosphate + diphosphate. It participates in cofactor biosynthesis; molybdopterin biosynthesis. In terms of biological role, catalyzes the conversion of (8S)-3',8-cyclo-7,8-dihydroguanosine 5'-triphosphate to cyclic pyranopterin monophosphate (cPMP). The chain is Cyclic pyranopterin monophosphate synthase from Bacillus licheniformis (strain ATCC 14580 / DSM 13 / JCM 2505 / CCUG 7422 / NBRC 12200 / NCIMB 9375 / NCTC 10341 / NRRL NRS-1264 / Gibson 46).